A 304-amino-acid chain; its full sequence is dTDP-4-dehydrorhamnose reductase (304 aa).

NADH-binding positions include 16 to 18, 42 to 43, and 66 to 68; these read GML, DI, and AWT. Residues 17 to 18, 42 to 43, and 66 to 68 each bind NADPH; these read ML, DI, and AWT. A dTDP-beta-L-rhamnose-binding site is contributed by 107–108; it reads TD. Residues Tyr-131 and Lys-135 each contribute to the NADH site. NADPH-binding residues include Tyr-131 and Lys-135. Tyr-131 acts as the Proton donor/acceptor in catalysis. Trp-157 serves as a coordination point for dTDP-beta-L-rhamnose.

This sequence belongs to the dTDP-4-dehydrorhamnose reductase family. In terms of assembly, homodimer. Mg(2+) serves as cofactor.

It catalyses the reaction dTDP-beta-L-rhamnose + NADP(+) = dTDP-4-dehydro-beta-L-rhamnose + NADPH + H(+). Its pathway is carbohydrate biosynthesis; dTDP-L-rhamnose biosynthesis. It participates in antibiotic biosynthesis; streptomycin biosynthesis. In terms of biological role, involved in the biosynthesis of the streptose moiety of streptomycin. Catalyzes the reduction of dTDP-6-deoxy-L-lyxo-4-hexulose to yield dTDP-L-rhamnose. RmlD uses NADH and NADPH nearly equally well. The chain is dTDP-4-dehydrorhamnose reductase from Streptomyces griseus.